Consider the following 224-residue polypeptide: Propanediol dehydratase medium subunit (224 aa).

The segment at 1–18 is targets protein to the BMC; sequence MEINEKLLRQIIEDVLRD.

It belongs to the diol/glycerol dehydratase medium subunit family. As to quaternary structure, the propanediol dehydratase enzyme is a heterotrimeric complex composed of a large (PduC), a medium (PduD) and a small (PduE) subunit. The cofactor is adenosylcob(III)alamin.

Its subcellular location is the bacterial microcompartment. The catalysed reaction is propane-1,2-diol = propanal + H2O. Its pathway is polyol metabolism; 1,2-propanediol degradation. Inhibited by glycerol. Its function is as follows. Part of the PduCDE complex that catalyzes the dehydration of 1,2-propanediol (1,2-PD) to propionaldehyde. Required for S.typhimurium growth on 1,2-PD as the sole carbon and energy source. This subunit is directly targeted to the bacterial microcompartment (BMC) dedicated to 1,2-PD degradation, and is also responsible for targeting the other 2 subunits (pduC and pduE). Functionally, the 1,2-PD-specific bacterial microcompartment (BMC) concentrates low levels of 1,2-PD catabolic enzymes, concentrates volatile reaction intermediates thus enhancing pathway flux and keeps the level of toxic, mutagenic propionaldehyde low. The chain is Propanediol dehydratase medium subunit from Salmonella typhimurium (strain LT2 / SGSC1412 / ATCC 700720).